We begin with the raw amino-acid sequence, 257 residues long: Imidazole glycerol phosphate synthase subunit HisF (257 aa).

Catalysis depends on residues Asp-12 and Asp-131.

This sequence belongs to the HisA/HisF family. Heterodimer of HisH and HisF.

It is found in the cytoplasm. The enzyme catalyses 5-[(5-phospho-1-deoxy-D-ribulos-1-ylimino)methylamino]-1-(5-phospho-beta-D-ribosyl)imidazole-4-carboxamide + L-glutamine = D-erythro-1-(imidazol-4-yl)glycerol 3-phosphate + 5-amino-1-(5-phospho-beta-D-ribosyl)imidazole-4-carboxamide + L-glutamate + H(+). It participates in amino-acid biosynthesis; L-histidine biosynthesis; L-histidine from 5-phospho-alpha-D-ribose 1-diphosphate: step 5/9. Functionally, IGPS catalyzes the conversion of PRFAR and glutamine to IGP, AICAR and glutamate. The HisF subunit catalyzes the cyclization activity that produces IGP and AICAR from PRFAR using the ammonia provided by the HisH subunit. The chain is Imidazole glycerol phosphate synthase subunit HisF from Teredinibacter turnerae (strain ATCC 39867 / T7901).